A 121-amino-acid chain; its full sequence is Small ribosomal subunit protein uS13 (121 aa).

Residues 92–121 (RKGLPVRGQRTKTNARTRKGPRKSGVQLKK) form a disordered region.

This sequence belongs to the universal ribosomal protein uS13 family. Part of the 30S ribosomal subunit. Forms a loose heterodimer with protein S19. Forms two bridges to the 50S subunit in the 70S ribosome.

Its function is as follows. Located at the top of the head of the 30S subunit, it contacts several helices of the 16S rRNA. In the 70S ribosome it contacts the 23S rRNA (bridge B1a) and protein L5 of the 50S subunit (bridge B1b), connecting the 2 subunits; these bridges are implicated in subunit movement. Contacts the tRNAs in the A and P-sites. The chain is Small ribosomal subunit protein uS13 from Polynucleobacter asymbioticus (strain DSM 18221 / CIP 109841 / QLW-P1DMWA-1) (Polynucleobacter necessarius subsp. asymbioticus).